Reading from the N-terminus, the 88-residue chain is CRISPR-associated endoribonuclease Cas2 3 (88 aa).

Aspartate 9 is a Mg(2+) binding site.

This sequence belongs to the CRISPR-associated endoribonuclease Cas2 protein family. Homodimer, forms a heterotetramer with a Cas1 homodimer. It depends on Mg(2+) as a cofactor.

Functionally, CRISPR (clustered regularly interspaced short palindromic repeat), is an adaptive immune system that provides protection against mobile genetic elements (viruses, transposable elements and conjugative plasmids). CRISPR clusters contain sequences complementary to antecedent mobile elements and target invading nucleic acids. CRISPR clusters are transcribed and processed into CRISPR RNA (crRNA). Functions as a ssRNA-specific endoribonuclease. Involved in the integration of spacer DNA into the CRISPR cassette. This chain is CRISPR-associated endoribonuclease Cas2 3, found in Thermodesulfovibrio yellowstonii (strain ATCC 51303 / DSM 11347 / YP87).